Consider the following 372-residue polypeptide: Aminomethyltransferase (372 aa).

This sequence belongs to the GcvT family. The glycine cleavage system is composed of four proteins: P, T, L and H.

The enzyme catalyses N(6)-[(R)-S(8)-aminomethyldihydrolipoyl]-L-lysyl-[protein] + (6S)-5,6,7,8-tetrahydrofolate = N(6)-[(R)-dihydrolipoyl]-L-lysyl-[protein] + (6R)-5,10-methylene-5,6,7,8-tetrahydrofolate + NH4(+). Its function is as follows. The glycine cleavage system catalyzes the degradation of glycine. In Streptomyces avermitilis (strain ATCC 31267 / DSM 46492 / JCM 5070 / NBRC 14893 / NCIMB 12804 / NRRL 8165 / MA-4680), this protein is Aminomethyltransferase.